The following is a 105-amino-acid chain: uncharacterized protein (105 aa).

The N-terminal stretch at 1 to 24 is a signal peptide; it reads MYWPCLVITPFTVGESFCLLLSLG.

This is an uncharacterized protein from Saccharomyces cerevisiae (strain ATCC 204508 / S288c) (Baker's yeast).